A 96-amino-acid chain; its full sequence is Large ribosomal subunit protein bL25 (96 aa).

Belongs to the bacterial ribosomal protein bL25 family. Part of the 50S ribosomal subunit; part of the 5S rRNA/L5/L18/L25 subcomplex. Contacts the 5S rRNA. Binds to the 5S rRNA independently of L5 and L18.

Functionally, this is one of the proteins that binds to the 5S RNA in the ribosome where it forms part of the central protuberance. The polypeptide is Large ribosomal subunit protein bL25 (Francisella tularensis subsp. holarctica (strain FTNF002-00 / FTA)).